We begin with the raw amino-acid sequence, 20 residues long: Cytochrome P450IIB (20 aa).

This sequence belongs to the cytochrome P450 family. Heme is required as a cofactor.

It is found in the endoplasmic reticulum membrane. The protein resides in the microsome membrane. The catalysed reaction is an organic molecule + reduced [NADPH--hemoprotein reductase] + O2 = an alcohol + oxidized [NADPH--hemoprotein reductase] + H2O + H(+). Its function is as follows. Cytochromes P450 are a group of heme-thiolate monooxygenases. In liver microsomes, this enzyme is involved in an NADPH-dependent electron transport pathway. This isozyme is active upon P.nitroanisole, aniline, D-benzphetamine, delta(9)-tetrahydrocannabinol (THC) and strychnine. This Cavia porcellus (Guinea pig) protein is Cytochrome P450IIB.